The sequence spans 270 residues: uncharacterized protein (270 aa).

The next 10 membrane-spanning stretches (helical) occupy residues Ala-12–Gly-32, Thr-35–Leu-55, Thr-64–Gln-84, Val-88–Leu-108, Thr-117–Glu-137, Leu-138–Leu-158, Ile-171–Gly-191, Gly-194–Phe-214, Ala-226–Gly-246, and Thr-248–Trp-268. EamA domains follow at residues Val-19–Thr-133 and Leu-150–Arg-269.

It belongs to the EamA transporter family.

It is found in the cell membrane. This is an uncharacterized protein from Archaeoglobus fulgidus (strain ATCC 49558 / DSM 4304 / JCM 9628 / NBRC 100126 / VC-16).